Reading from the N-terminus, the 106-residue chain is Small ribosomal subunit protein uS10 (106 aa).

It belongs to the universal ribosomal protein uS10 family. In terms of assembly, part of the 30S ribosomal subunit.

In terms of biological role, involved in the binding of tRNA to the ribosomes. The polypeptide is Small ribosomal subunit protein uS10 (Prochlorococcus marinus (strain MIT 9312)).